We begin with the raw amino-acid sequence, 926 residues long: Ubiquitin carboxyl-terminal hydrolase 4 (926 aa).

The Rhodanese domain maps to 205-328 (SQMEILLIDI…WLKSNYGRQV (124 aa)). Position 443 is a phosphoserine (Ser-443). The USP domain occupies 562–923 (VGLENLGNSC…NAYVLFYHRV (362 aa)). The Nucleophile role is filled by Cys-571. The active-site Proton acceptor is His-880.

Belongs to the peptidase C19 family. As to quaternary structure, interacts with BRO1, RFU1 and VPS32. Associates with the 26S proteasome.

The protein localises to the cytoplasm. It localises to the late endosome membrane. It carries out the reaction Thiol-dependent hydrolysis of ester, thioester, amide, peptide and isopeptide bonds formed by the C-terminal Gly of ubiquitin (a 76-residue protein attached to proteins as an intracellular targeting signal).. RFU1 is an inhibitor of deubiquitination activity. Its function is as follows. Ubiquitin thioesterase that acts at the late endosome/prevacuolar compartment to recover ubiquitin from ubiquitinated membrane proteins en route to the vacuole. Also removes ubiquitin from soluble proteins targeted to proteasomes. Is essential to maintain a normal level of free ubiquitin. Involved in the ammonium-induced down-regulation of the GAP1 permease and the UME3 destruction in response to oxidative stress. Has a role in the RAD9 checkpoint response to TOP1 poisons. Required for promoting coordination of DNA replication and avoids DNA overreplication. The sequence is that of Ubiquitin carboxyl-terminal hydrolase 4 (DOA4) from Saccharomyces cerevisiae (strain RM11-1a) (Baker's yeast).